Reading from the N-terminus, the 289-residue chain is Phosphatidylglycerol--prolipoprotein diacylglyceryl transferase (289 aa).

3 helical membrane passes run 13–33 (LGPL…LLGW), 61–81 (FILW…VLFY), and 99–119 (GGMS…LFAM). Residue arginine 144 participates in a 1,2-diacyl-sn-glycero-3-phospho-(1'-sn-glycerol) binding. Helical transmembrane passes span 218–238 (GVVM…LENV) and 250–270 (LGLT…LWLI).

Belongs to the Lgt family.

The protein localises to the cell inner membrane. The catalysed reaction is L-cysteinyl-[prolipoprotein] + a 1,2-diacyl-sn-glycero-3-phospho-(1'-sn-glycerol) = an S-1,2-diacyl-sn-glyceryl-L-cysteinyl-[prolipoprotein] + sn-glycerol 1-phosphate + H(+). The protein operates within protein modification; lipoprotein biosynthesis (diacylglyceryl transfer). Functionally, catalyzes the transfer of the diacylglyceryl group from phosphatidylglycerol to the sulfhydryl group of the N-terminal cysteine of a prolipoprotein, the first step in the formation of mature lipoproteins. The chain is Phosphatidylglycerol--prolipoprotein diacylglyceryl transferase from Phenylobacterium zucineum (strain HLK1).